The chain runs to 907 residues: DNA (cytosine-5)-methyltransferase CMT3 (907 aa).

Low complexity predominate over residues 1–15 (MAPSSPSSAAAPTRT). Residues 1-154 (MAPSSPSSAA…RNAATRRPDE (154 aa)) are disordered. A compositionally biased stretch (basic and acidic residues) spans 30–63 (ATDEPSTKRTRRPKAETKPRKKKDEVKEEEKPPM). A compositionally biased stretch (acidic residues) spans 64–89 (EDDACGEEPDAEEMALGEEAEAEEAE). Composition is skewed to basic and acidic residues over residues 115 to 124 (HGSDGDHDPE) and 131 to 140 (PAKEARDKWP). A BAH domain is found at 172–297 (TLYCLHDDVY…VAYSTFANIP (126 aa)). Residues 303-323 (SGSDTASDISSDDVDSSKGKV) are disordered. Residues 335–868 (ATLLDLYSGC…YSLGLAYQRE (534 aa)) enclose the SAM-dependent MTase C5-type domain. Positions 437–500 (FVVEKLAGIC…EGYRRKILPL (64 aa)) constitute a Chromo domain. Residue Cys-513 is part of the active site.

This sequence belongs to the class I-like SAM-binding methyltransferase superfamily. C5-methyltransferase family.

Its subcellular location is the nucleus. The catalysed reaction is a 2'-deoxycytidine in DNA + S-adenosyl-L-methionine = a 5-methyl-2'-deoxycytidine in DNA + S-adenosyl-L-homocysteine + H(+). Involved in CpXpG DNA methylation. Plays a critical role in the maintenance of CpXpG DNA methylation and suppression of a wide spectrum of transposable element (TE) activities. Required for proper plant development in reproductive stage. This Oryza sativa subsp. japonica (Rice) protein is DNA (cytosine-5)-methyltransferase CMT3.